Consider the following 376-residue polypeptide: Thiol-disulfide oxidoreductase LTO1 (376 aa).

A chloroplast-targeting transit peptide spans 1–45 (MMARFVSVSSCQFHFGFREVSPPSVTSYPRRFEVSDRRFPAIPIK). Positions 44 to 77 (IKCSSSEPENGEDSAPSLSSSSSSSTSEVSTSNS) are disordered. Topologically, residues 46-81 (CSSSEPENGEDSAPSLSSSSSSSTSEVSTSNSSTYN) are stromal. A compositionally biased stretch (low complexity) spans 57 to 77 (SAPSLSSSSSSSTSEVSTSNS). Residues 82 to 102 (WYTGIGGIGMLDTAYLTYLKV) traverse the membrane as a helical segment. Over 103–125 (TGSDAFCPIGGGTCGDVLNSDYA) the chain is Lumenal. A disulfide bond links C109 and C116. Residues 126 to 146 (VVFGVPLPVIGFVMYGVVTAL) form a helical membrane-spanning segment. Residues 147–165 (SAELGEGNLPFGISKSNGR) lie on the Stromal side of the membrane. The helical transmembrane segment at 166-186 (FALFGITTAMASASAYFLYIL) threads the bilayer. The Lumenal segment spans residues 187–192 (STKLSG). The chain crosses the membrane as a helical span at residues 193 to 213 (SSCLYCLVSAFLSFSLFFLSV). C195 and C198 form a disulfide bridge. Topologically, residues 214 to 223 (KDVKLQEIQQ) are stromal. A helical transmembrane segment spans residues 224–244 (VVGLQICLAIIVVASLTASYS). Over 245–376 (TAQPIPSRSG…DQANETNQLQ (132 aa)) the chain is Lumenal. 2 disulfides stabilise this stretch: C293–C296 and C316–C331.

The protein belongs to the VKOR family. In terms of assembly, interacts with the PSII subunits PSBO1 and PSBO2. Interacts with TL17, TL20.3, HCF164, PETJ, VDE1, EDA3, FKBP13 and FKBP20-2. In terms of tissue distribution, expressed in cotyledons, rosette leaves, stems, cauline leaves and flowers.

It localises to the plastid. The protein localises to the chloroplast thylakoid membrane. Its function is as follows. Thiol-disulfide oxidoreductase catalyzing disulfide bond formation of chloroplast proteins and involved in redox regulation and photosynthetic electron transport. Required for the assembly of photosystem II (PSII) through the formation of disulfide bond in PSBO, a subunit of the PSII oxygen-evolving complex in the thylakoid lumen. Involved in the formation of disulfide bonds in the lumenal protein FKBP13. In vitro, reduces phylloquinone (vitamin K1) and menaquinone (vitamin K2) to their respective quinol. Cannot reduce phylloquinone epoxide to phylloquinone. Plays an important role in regulating the thylakoid lumen redox. This is Thiol-disulfide oxidoreductase LTO1 from Arabidopsis thaliana (Mouse-ear cress).